A 364-amino-acid polypeptide reads, in one-letter code: Nucleoside ABC transporter permease protein NupB (364 aa).

8 helical membrane passes run 9-29, 77-99, 105-125, 138-158, 195-215, 244-264, 284-304, and 326-346; these read LVPL…MLAF, FNIG…ALSF, LLMI…MGFI, VITT…MIHS, TLNI…IIFT, LILS…VYGF, MAVA…ALLF, and VVTA…VMLP.

Belongs to the binding-protein-dependent transport system permease family. In terms of assembly, the complex is composed of two ATP-binding proteins (NupA), two transmembrane proteins (NupB and NupC) and a solute-binding protein (BmpA).

The protein localises to the cell membrane. Its function is as follows. Part of an ABC transporter complex involved in the uptake of all common nucleosides. Responsible for the translocation of the substrate across the membrane. The sequence is that of Nucleoside ABC transporter permease protein NupB from Lactococcus lactis subsp. cremoris (strain MG1363).